A 906-amino-acid polypeptide reads, in one-letter code: Protein translocase subunit SecA (906 aa).

Residues Gln-86, Gly-104 to Thr-108, and Asp-511 contribute to the ATP site. 2 stretches are compositionally biased toward basic and acidic residues: residues His-853–Glu-865 and Val-877–Asp-888. The tract at residues His-853–Glu-906 is disordered. Zn(2+) is bound by residues Cys-890, Cys-892, Cys-901, and His-902. Over residues Lys-896–Glu-906 the composition is skewed to basic residues.

This sequence belongs to the SecA family. As to quaternary structure, monomer and homodimer. Part of the essential Sec protein translocation apparatus which comprises SecA, SecYEG and auxiliary proteins SecDF-YajC and YidC. The cofactor is Zn(2+).

Its subcellular location is the cell inner membrane. It is found in the cytoplasm. It catalyses the reaction ATP + H2O + cellular proteinSide 1 = ADP + phosphate + cellular proteinSide 2.. Its function is as follows. Part of the Sec protein translocase complex. Interacts with the SecYEG preprotein conducting channel. Has a central role in coupling the hydrolysis of ATP to the transfer of proteins into and across the cell membrane, serving both as a receptor for the preprotein-SecB complex and as an ATP-driven molecular motor driving the stepwise translocation of polypeptide chains across the membrane. This chain is Protein translocase subunit SecA, found in Francisella tularensis subsp. novicida (strain U112).